The chain runs to 93 residues: ATP synthase subunit c (93 aa).

Transmembrane regions (helical) follow at residues 13–33 (AIGV…GMGI) and 58–78 (ISLA…FILL).

This sequence belongs to the ATPase C chain family. In terms of assembly, F-type ATPases have 2 components, F(1) - the catalytic core - and F(0) - the membrane proton channel. F(1) has five subunits: alpha(3), beta(3), gamma(1), delta(1), epsilon(1). F(0) has three main subunits: a(1), b(2) and c(10-14). The alpha and beta chains form an alternating ring which encloses part of the gamma chain. F(1) is attached to F(0) by a central stalk formed by the gamma and epsilon chains, while a peripheral stalk is formed by the delta and b chains.

Its subcellular location is the cell inner membrane. Its function is as follows. F(1)F(0) ATP synthase produces ATP from ADP in the presence of a proton or sodium gradient. F-type ATPases consist of two structural domains, F(1) containing the extramembraneous catalytic core and F(0) containing the membrane proton channel, linked together by a central stalk and a peripheral stalk. During catalysis, ATP synthesis in the catalytic domain of F(1) is coupled via a rotary mechanism of the central stalk subunits to proton translocation. Key component of the F(0) channel; it plays a direct role in translocation across the membrane. A homomeric c-ring of between 10-14 subunits forms the central stalk rotor element with the F(1) delta and epsilon subunits. The chain is ATP synthase subunit c from Campylobacter hominis (strain ATCC BAA-381 / DSM 21671 / CCUG 45161 / LMG 19568 / NCTC 13146 / CH001A).